Consider the following 146-residue polypeptide: Putative pre-16S rRNA nuclease (146 aa).

It belongs to the YqgF nuclease family.

Its subcellular location is the cytoplasm. Its function is as follows. Could be a nuclease involved in processing of the 5'-end of pre-16S rRNA. This Pseudomonas syringae pv. tomato (strain ATCC BAA-871 / DC3000) protein is Putative pre-16S rRNA nuclease.